We begin with the raw amino-acid sequence, 404 residues long: Cytoplasmic tRNA 2-thiolation protein 2 (404 aa).

It belongs to the CTU2/NCS2 family.

The protein resides in the cytoplasm. The protein operates within tRNA modification; 5-methoxycarbonylmethyl-2-thiouridine-tRNA biosynthesis. Its function is as follows. Plays a central role in 2-thiolation of mcm(5)S(2)U at tRNA wobble positions of tRNA(Lys), tRNA(Glu) and tRNA(Gln). May act by forming a heterodimer with NCS6/CTU1 that ligates sulfur from thiocarboxylated URM1 onto the uridine of tRNAs at wobble position. This Drosophila erecta (Fruit fly) protein is Cytoplasmic tRNA 2-thiolation protein 2.